Reading from the N-terminus, the 89-residue chain is Small ribosomal subunit protein uS15 (89 aa).

It belongs to the universal ribosomal protein uS15 family. As to quaternary structure, part of the 30S ribosomal subunit. Forms a bridge to the 50S subunit in the 70S ribosome, contacting the 23S rRNA.

In terms of biological role, one of the primary rRNA binding proteins, it binds directly to 16S rRNA where it helps nucleate assembly of the platform of the 30S subunit by binding and bridging several RNA helices of the 16S rRNA. Its function is as follows. Forms an intersubunit bridge (bridge B4) with the 23S rRNA of the 50S subunit in the ribosome. This is Small ribosomal subunit protein uS15 from Geobacillus sp. (strain WCH70).